A 500-amino-acid chain; its full sequence is Transcription factor-like 5 protein (500 aa).

2 stretches are compositionally biased toward pro residues: residues 1–12 and 196–210; these read MSGPGPREPPPE and AEPP…PPEP. Disordered stretches follow at residues 1–34 and 191–211; these read MSGP…ALGE and FNSI…PEPG. Positions 347–356 are R3 epitope (recognized by Chagas's antibodies); it reads MRQLDTNVER. Residues 365–410 form a disordered region; that stretch reads VGEGATATQGAWQSSESSQANLGEQAQSGPQGGRSQRRERHNRMER. The segment covering 370–393 has biased composition (polar residues); the sequence is TATQGAWQSSESSQANLGEQAQSG. The bHLH domain occupies 400 to 450; the sequence is QRRERHNRMERDRRRRIRICCDELNLLVPFCNAETDKATTLQWTTAFLKYI. Residues 481-500 form an R1 epitope (recognized by Chagas's antibodies) region; it reads SLVTCPAQGSLQSSPSMEIK.

In terms of assembly, efficient DNA binding requires dimerization with another bHLH protein. As to expression, isoform 3 is testis specific. Isoform 2 is pancreas specific.

The protein resides in the nucleus. Functionally, putative transcription factor. Isoform 3 may play a role in early spermatogenesis. The sequence is that of Transcription factor-like 5 protein (TCFL5) from Homo sapiens (Human).